Reading from the N-terminus, the 420-residue chain is Glucose-1-phosphate adenylyltransferase (420 aa).

Alpha-D-glucose 1-phosphate contacts are provided by residues tyrosine 107, glycine 173, 188–189 (EK), and serine 206.

The protein belongs to the bacterial/plant glucose-1-phosphate adenylyltransferase family. As to quaternary structure, homotetramer.

The catalysed reaction is alpha-D-glucose 1-phosphate + ATP + H(+) = ADP-alpha-D-glucose + diphosphate. The protein operates within glycan biosynthesis; glycogen biosynthesis. Its function is as follows. Involved in the biosynthesis of ADP-glucose, a building block required for the elongation reactions to produce glycogen. Catalyzes the reaction between ATP and alpha-D-glucose 1-phosphate (G1P) to produce pyrophosphate and ADP-Glc. This is Glucose-1-phosphate adenylyltransferase from Shewanella baltica (strain OS185).